Reading from the N-terminus, the 674-residue chain is Endopolyphosphatase (674 aa).

The Cytoplasmic portion of the chain corresponds to 1–21 (MVVVGKSEVRNVSMSRPKKKS). 2 propeptides (removed in mature form) span residues 1–83 (MVVV…VIIK) and 385–674 (EQST…YKDD). Residue K6 forms a Glycyl lysine isopeptide (Lys-Gly) (interchain with G-Cter in ubiquitin) linkage. A helical; Signal-anchor for type II membrane protein transmembrane segment spans residues 22–42 (LIAILSTCVLFFLVFIIGAKF). Residues 43–674 (QYVSVFSKFL…SFASSGYKDD (632 aa)) are Vacuolar-facing. N58 is a glycosylation site (N-linked (GlcNAc...) asparagine). Residues 384 to 403 (MEQSTRVQQGEDSNEEDEET) form a disordered region. N-linked (GlcNAc...) asparagine glycans are attached at residues N505 and N511.

It belongs to the endopolyphosphatase PPN1 family. Homotetramer. Interacts with PPN2. It depends on Mn(2+) as a cofactor. The cofactor is Mg(2+). Co(2+) is required as a cofactor. Zn(2+) serves as cofactor. In terms of processing, processing by proteases in the vacuole is required for activation. Ubiquitinated. Ubiquitination mediates sorting into internal vesicles in late endosomes. TUL1 and RSP5 are required for ubiquitination. Other cytoplasmic Lys residues than Lys-6 may also be ubiquitinated. Post-translationally, N-glycosylated. N-glycosylation is essential for the protease-mediated maturation.

It is found in the vacuole membrane. The protein localises to the cytoplasm. It catalyses the reaction [phosphate](n+1) + n H2O = (n+1) phosphate + n H(+). The catalysed reaction is [phosphate](n) + H2O = [phosphate](n-1) + phosphate + H(+). The enzyme catalyses dATP + H2O = dADP + phosphate + H(+). Inhibited by heparin and EDTA. Catalyzes the hydrolysis of inorganic polyphosphate (polyP) chains of many hundreds of phosphate residues into shorter lengths. Has both exopolyphosphatase and endopolyphosphatase activities at different ratios depending on divalent cations by cleaving phosphate from the chain end and by fragmenting long-chain polymers into shorter ones, respectively. The limited digestion products are 1 and 3 P(i) residues. Also releases phosphate from dATP. dATP phosphohydrolase activity is about 7-fold lower than the exopolyphosphatase activity. The sequence is that of Endopolyphosphatase from Saccharomyces cerevisiae (strain ATCC 204508 / S288c) (Baker's yeast).